The sequence spans 144 residues: Bacilliredoxin BC_2157 (144 aa).

It belongs to the bacilliredoxin family.

The sequence is that of Bacilliredoxin BC_2157 from Bacillus cereus (strain ATCC 14579 / DSM 31 / CCUG 7414 / JCM 2152 / NBRC 15305 / NCIMB 9373 / NCTC 2599 / NRRL B-3711).